Reading from the N-terminus, the 228-residue chain is MATWNNLNLQNGASPLMEQIIFFHDHTLIILIMITILVGYLMINLFFNKYINRFLLEGQMIELIWTILPAITLIFIALPSLRLLYLLDELNNPLITLKSIGHQWYWSYEYSDFNNIQFDSYMIPSKEMKFNEFRLLDVDNRIILPMNNQIRIMVTATDVIHSWTVPSLGVKIDANPGRLNQTNFFINRPGLFYGQCSEICGANHSFMPIVIESISINNFIKWINNYSS.

Topologically, residues 1–26 (MATWNNLNLQNGASPLMEQIIFFHDH) are mitochondrial intermembrane. The helical transmembrane segment at 27–48 (TLIILIMITILVGYLMINLFFN) threads the bilayer. The Mitochondrial matrix segment spans residues 49 to 62 (KYINRFLLEGQMIE). The helical transmembrane segment at 63–82 (LIWTILPAITLIFIALPSLR) threads the bilayer. Topologically, residues 83-228 (LLYLLDELNN…FIKWINNYSS (146 aa)) are mitochondrial intermembrane. Cu cation contacts are provided by His161, Cys196, Glu198, Cys200, His204, and Met207. Glu198 contributes to the Mg(2+) binding site.

It belongs to the cytochrome c oxidase subunit 2 family. In terms of assembly, component of the cytochrome c oxidase (complex IV, CIV), a multisubunit enzyme composed of a catalytic core of 3 subunits and several supernumerary subunits. The complex exists as a monomer or a dimer and forms supercomplexes (SCs) in the inner mitochondrial membrane with ubiquinol-cytochrome c oxidoreductase (cytochrome b-c1 complex, complex III, CIII). Cu cation serves as cofactor.

Its subcellular location is the mitochondrion inner membrane. The catalysed reaction is 4 Fe(II)-[cytochrome c] + O2 + 8 H(+)(in) = 4 Fe(III)-[cytochrome c] + 2 H2O + 4 H(+)(out). In terms of biological role, component of the cytochrome c oxidase, the last enzyme in the mitochondrial electron transport chain which drives oxidative phosphorylation. The respiratory chain contains 3 multisubunit complexes succinate dehydrogenase (complex II, CII), ubiquinol-cytochrome c oxidoreductase (cytochrome b-c1 complex, complex III, CIII) and cytochrome c oxidase (complex IV, CIV), that cooperate to transfer electrons derived from NADH and succinate to molecular oxygen, creating an electrochemical gradient over the inner membrane that drives transmembrane transport and the ATP synthase. Cytochrome c oxidase is the component of the respiratory chain that catalyzes the reduction of oxygen to water. Electrons originating from reduced cytochrome c in the intermembrane space (IMS) are transferred via the dinuclear copper A center (CU(A)) of subunit 2 and heme A of subunit 1 to the active site in subunit 1, a binuclear center (BNC) formed by heme A3 and copper B (CU(B)). The BNC reduces molecular oxygen to 2 water molecules using 4 electrons from cytochrome c in the IMS and 4 protons from the mitochondrial matrix. In Yponomeuta malinellus (European small ermine moth), this protein is Cytochrome c oxidase subunit 2 (COII).